Reading from the N-terminus, the 419-residue chain is DNA ligase (419 aa).

Residues 1–120 (MLNQFPGQYS…ARQKRGAHTN (120 aa)) form an NTD region. An AD domain region spans residues 121–317 (RGMIPPMLVK…NYHSAHLAKL (197 aa)). ATP is bound by residues glutamine 149, lysine 151, glutamate 203, and phenylalanine 232. The active-site N6-AMP-lysine intermediate is lysine 151. Residue glutamate 203 participates in a divalent metal cation binding. An a divalent metal cation-binding site is contributed by glutamate 291. Positions 294 and 316 each coordinate ATP. The tract at residues 318–419 (KPLLDAEFIL…REPINVLEII (102 aa)) is OB domain.

This sequence belongs to the ATP-dependent DNA ligase family. It depends on a divalent metal cation as a cofactor.

The protein localises to the virion. It carries out the reaction ATP + (deoxyribonucleotide)n-3'-hydroxyl + 5'-phospho-(deoxyribonucleotide)m = (deoxyribonucleotide)n+m + AMP + diphosphate.. Its function is as follows. Very low-fidelity DNA ligase that seals nicks in double-stranded DNA during DNA repair. Together with the viral repair DNA polymerase X, fills the single nucleotide gaps generated by the AP endonuclease. It is not essential for viral replication and recombination. Displays a very low adenylation activity towards DNA with 3'-dideoxy- or 3'-amino-terminated nicks compared to regular nick DNA. This is DNA ligase (LIG) from Ornithodoros (relapsing fever ticks).